The sequence spans 308 residues: Protein translocase subunit SecF (308 aa).

6 consecutive transmembrane segments (helical) span residues 23-42 (VSYSFSIILSLISLIWIGIY), 140-160 (IEAGAMAMLFSFLAIMVYIGV), 164-184 (WYFGFGILIALVHDVILALGF), 194-214 (LSTIAAVLTIIGYSVNDSVVI), 246-266 (ILTVITTLLANLALILFGGKA), and 272-292 (VLVFFGIIAGTYSSIFISAPI).

Belongs to the SecD/SecF family. SecF subfamily. Forms a complex with SecD. Part of the essential Sec protein translocation apparatus which comprises SecA, SecYEG and auxiliary proteins SecDF-YajC and YidC.

It is found in the cell inner membrane. Part of the Sec protein translocase complex. Interacts with the SecYEG preprotein conducting channel. SecDF uses the proton motive force (PMF) to complete protein translocation after the ATP-dependent function of SecA. The sequence is that of Protein translocase subunit SecF from Rickettsia typhi (strain ATCC VR-144 / Wilmington).